The primary structure comprises 692 residues: ATP-dependent RNA helicase MSS116, mitochondrial (692 aa).

The transit peptide at 1–37 (MMIARFGKQVLRKNVLVSNRIHFPVISRGFHNSFINK) directs the protein to the mitochondrion. Residues 82 to 113 (SQVTEQTELTKSEEEEKKKKNINTNTNKNDRK) are disordered. Basic and acidic residues predominate over residues 89–99 (ELTKSEEEEKK). Positions 130 to 158 (DFKNTGLIDDVILRALDRAHFKDLTPIQQ) match the Q motif motif. Positions 162 to 349 (VPLLETERGM…KQHINKKYDY (188 aa)) constitute a Helicase ATP-binding domain. 175–182 (AKTGTGKT) contributes to the ATP binding site. The DEAD box signature appears at 290 to 293 (DEAD). A Helicase C-terminal domain is found at 384-534 (YVNQLVKDSP…QVHESSEIDN (151 aa)). A disordered region spans residues 643–692 (NRYSGGGGNRSEKRFSFAGRGGNSGGHSGRGRGGRSGYSGGRSSQYSDWE). Gly residues predominate over residues 661 to 670 (GRGGNSGGHS).

Belongs to the DEAD box helicase family. DDX18/HAS1 subfamily.

It is found in the mitochondrion matrix. The catalysed reaction is ATP + H2O = ADP + phosphate + H(+). ATP-dependent RNA helicase required for mitochondrial splicing of group I and II introns. Also required for efficient mitochondrial translation. The polypeptide is ATP-dependent RNA helicase MSS116, mitochondrial (MSS116) (Lodderomyces elongisporus (strain ATCC 11503 / CBS 2605 / JCM 1781 / NBRC 1676 / NRRL YB-4239) (Yeast)).